The following is a 1275-amino-acid chain: MKRIPRKTKGKSSGKGNDSTERADDGSSQLRDKQNNKAGPATTEPGTSNREQYKARPGIASVQRATESAEMPMKNNDEGTPDKKGNTKGDLVNEHSEAKDEADEATKKQAKDTDKSKAQVTYSDTGINNANELSRSGNVDNEGGSNQKPMSTRIAEATSAIVSKHPARVGLPPTASSGHGYQCHVCSAVLFSPLDLDAHVASHGLHGNMTLTSSDIQRHITEFISSWQNHPIVQVSADVENKKTAQLLHADTPRLVTWDAGLCTSFKIVPIVPAQVPQDVLAYTFFTSSYAIQSPFPEAAVSRIVVHTRWASNVDFDRDSSVIMAPPTENNIHLFKQLLNTETLSVRGANPLMFRANVLHMLLEFVLDNLYLNRHTGFSQDHTPFTEGANLRSLPGPDAEKWYSIMYPTRMGTPNVSKICNFVASCVRNRVGRFDRAQMMNGAMSEWVDVFETSDALTVSIRGRWMARLARMNINPTEIEWALTECAQGYVTVTSPYAPIVNRLMPYRISNAERQISQIIRIMNIGNNATVIQPVLQDISVLLQRISPLQIDPTIISNTMSTVSESTTQTLSPASSILGKLRPSNSDFSSFRVALAGWLYNGVVTTVIDDSSYPKDGGSVTSLENLWDFFILALALPLTTDPCAPVKAFMTLANMMVGFETIPMDNQIYTQSRRASAFSTPHTWPRCFMNIQLISPIDAPILRQWAEIIHRYWPNPSQIRYGAPNVFGSANLFTPPEVLLLPIDHQPANVTTPTLDFTNELTNWRARVCELMKNLVDNQRYQPGWTQSLVSSMRGTLDKLKLIKSMTPMYLQQLAPVELAVIAPMLPFPPFQVPYVRLDRDRVPTMVGVTRQSRDTITQPALSLSTTNTTVGVPLALDARAITVALLSGKYPPDLVTNVWYADAIYPMYADTEVFSNLQRDMITCEAVQTLVTLVAQISETQYPVDRYLDWIPSLRASAATAATFAEWVNTSMKTAFDLSDMLLEPLLSGDPRMTQLAIQYQQYNGRTFNIIPEMPGSVIADCVQLTAEVFNHEYNLFGIARGDIIIGRVQSTHLWSPLAPPPDLVFDRDTPGVHIFGRDCRISFGMNGAAPMIRDETGLMVPFEGNWIFPLALWQMNTRYFNQQFDAWIKTGELRIRIEMGAYPYMLHYYDPRQYANAWNLTSAWLEEITPTSIPSVPFMVPISSDHDISSAPAVQYIISTEYNDRSLFCTNSSSPQTIAGPDKHIPVERYNILTNPDAPPTQIQLPEVVDLYNVVTRYAYETPPITAVVMGVP.

Residues 1-12 (MKRIPRKTKGKS) are compositionally biased toward basic residues. The disordered stretch occupies residues 1 to 149 (MKRIPRKTKG…DNEGGSNQKP (149 aa)). Composition is skewed to basic and acidic residues over residues 18-35 (DSTERADDGSSQLRDKQN) and 75-117 (NNDE…DKSK). Over residues 118–149 (AQVTYSDTGINNANELSRSGNVDNEGGSNQKP) the composition is skewed to polar residues. Residues 181-203 (YQCHVCSAVLFSPLDLDAHVASH) form a C2H2-type zinc finger.

The protein belongs to the orthoreovirus lambda-1 protein family. As to quaternary structure, homodecamer; each decamer is made up of two conformers of VP2, called VP2A and VP2B. 12 homodecamers assemble to form an icosahedral capsid. Interacts with protein mu-NS; in viral inclusions. The cofactor is Mg(2+). Mn(2+) is required as a cofactor.

The protein resides in the virion. It catalyses the reaction ATP + H2O = ADP + phosphate + H(+). Inner capsid protein that self-assembles to form an icosahedral capsid with a T=2 symmetry, which consists of 120 copies of VP2, with channels at each of its five-fold vertices. This capsid constitutes the innermost concentric layer of the viral mature particle. Functionally, displays NTPase, RNA 5'-triphosphatase (RTPase) and RNA helicase activities. Helicase activity might be involved in unwinding or reannealing dsRNA during RNA synthesis. RTPase enzymatic activity represents the first step in RNA capping, which yields a 5'-diphosphorylated plus-strand RNA. The protein is Inner capsid protein lambda-1 (L3) of Reovirus type 3 (strain Dearing) (T3D).